Here is a 465-residue protein sequence, read N- to C-terminus: 3-isopropylmalate dehydratase large subunit (465 aa).

Positions 346, 406, and 409 each coordinate [4Fe-4S] cluster.

It belongs to the aconitase/IPM isomerase family. LeuC type 1 subfamily. As to quaternary structure, heterodimer of LeuC and LeuD. Requires [4Fe-4S] cluster as cofactor.

It carries out the reaction (2R,3S)-3-isopropylmalate = (2S)-2-isopropylmalate. It participates in amino-acid biosynthesis; L-leucine biosynthesis; L-leucine from 3-methyl-2-oxobutanoate: step 2/4. Catalyzes the isomerization between 2-isopropylmalate and 3-isopropylmalate, via the formation of 2-isopropylmaleate. This is 3-isopropylmalate dehydratase large subunit from Psychromonas ingrahamii (strain DSM 17664 / CCUG 51855 / 37).